The chain runs to 417 residues: RH-like protein IIR (417 aa).

Helical transmembrane passes span 12 to 32 (CLPLCALTLEAALILLFYFFT), 44 to 64 (LVASYQVGQDLTVMAAIGFGF), 77 to 97 (VAFSLFMLALGVQWAILLDGF), 125 to 145 (ISVDAVLGKVNLVQLVVMVLV), 172 to 192 (IYVFAAYFGLSVAWCLPKPLP), 203 to 223 (TIPSLSAMLGALFLWMFWPSF), 238 to 258 (VFNTYYAVAVSVVTAISGSSL), 265 to 285 (ISMSYMHNAVLAGGVAVGTSC), 287 to 307 (LIPSPWLAMVLGLVAGLISVG), 331 to 351 (NFSWLGLLGEIIYIVLVVRHT), and 358 to 378 (MIGFQVLLRIGEFSLATTIAL).

It belongs to the ammonium transporter (TC 2.A.49) family. Rh subfamily.

It localises to the membrane. In terms of biological role, may be part of an oligomeric complex which is likely to have a transport or channel function in the erythrocyte membrane. The chain is RH-like protein IIR from Pan troglodytes (Chimpanzee).